A 203-amino-acid chain; its full sequence is Thymidylate kinase (203 aa).

14–21 contacts ATP; it reads GGEGIGKS.

The protein belongs to the thymidylate kinase family.

It carries out the reaction dTMP + ATP = dTDP + ADP. In terms of biological role, phosphorylation of dTMP to form dTDP in both de novo and salvage pathways of dTTP synthesis. The protein is Thymidylate kinase of Rickettsia peacockii (strain Rustic).